Consider the following 465-residue polypeptide: 2-methylcitrate synthase, mitochondrial (465 aa).

Positions 72 and 190 each coordinate CoA. H265 serves as a coordination point for oxaloacetate. L300 is a binding site for CoA. Residue H301 is part of the active site. CoA contacts are provided by V342, G344, and Y345. H347 and R356 together coordinate oxaloacetate. The active site involves H347. Residues T394, K395, and N400 each coordinate CoA. Residue D402 is part of the active site. Residues R428 and R448 each contribute to the oxaloacetate site.

The protein belongs to the citrate synthase family. Homodimer.

It localises to the mitochondrion matrix. It carries out the reaction propanoyl-CoA + oxaloacetate + H2O = (2S,3S)-2-methylcitrate + CoA + H(+). The catalysed reaction is oxaloacetate + acetyl-CoA + H2O = citrate + CoA + H(+). The protein operates within organic acid metabolism; propanoate degradation. With respect to regulation, activity is inhibited by p-chloromercuribenzoate (pCMB), monoiodoacetamide, H(2)O(2), ATP, ADP, NADH, NADPH, Hg(2+) and Zn(2+). In terms of biological role, component of the methylcitrate cycle that catalyzes the synthesis of (2S,3S)-2-methylcitrate from propionyl-CoA and oxaloacetate. Plays an important role in detoxification of propionyl-CoA, an inhibitor of both primary and secondary metabolism. Also has citrate synthase activity using as substrates acetyl-CoA and oxaloacetate. This is 2-methylcitrate synthase, mitochondrial from Yarrowia lipolytica (strain CLIB 122 / E 150) (Yeast).